Consider the following 93-residue polypeptide: Small ribosomal subunit protein uS19 (93 aa).

It belongs to the universal ribosomal protein uS19 family.

In terms of biological role, protein S19 forms a complex with S13 that binds strongly to the 16S ribosomal RNA. This Frankia casuarinae (strain DSM 45818 / CECT 9043 / HFP020203 / CcI3) protein is Small ribosomal subunit protein uS19.